The sequence spans 154 residues: Superoxide dismutase [Cu-Zn] (154 aa).

Cu cation-binding residues include H47, H49, and H64. A disulfide bridge links C58 with C147. The Zn(2+) site is built by H64, H72, H81, and D84. H121 serves as a coordination point for Cu cation. R144 is a binding site for substrate.

Belongs to the Cu-Zn superoxide dismutase family. In terms of assembly, homodimer. The cofactor is Cu cation. Zn(2+) serves as cofactor.

It localises to the cytoplasm. The catalysed reaction is 2 superoxide + 2 H(+) = H2O2 + O2. Its function is as follows. Destroys radicals which are normally produced within the cells and which are toxic to biological systems. The chain is Superoxide dismutase [Cu-Zn] (SOD1) from Podospora anserina (Pleurage anserina).